Reading from the N-terminus, the 92-residue chain is Large ribosomal subunit protein eL43 (92 aa).

A C4-type zinc finger spans residues 39-60; it reads CDFCGKYGMKRQAVGIWCCKGC.

This sequence belongs to the eukaryotic ribosomal protein eL43 family.

The chain is Large ribosomal subunit protein eL43 (RPL37a) from Ostreococcus tauri.